The following is a 636-amino-acid chain: Putative lipase ATG15 (636 aa).

Residues Met1–Arg19 are Cytoplasmic-facing. Residues Leu20–Phe42 traverse the membrane as a helical; Signal-anchor for type II membrane protein segment. Topologically, residues Ser43–Met636 are lumenal. Residues Asn211, Asn233, Asn291, Asn315, and Asn477 are each glycosylated (N-linked (GlcNAc...) asparagine). A disordered region spans residues Gly478 to Ser500. Over residues Thr479 to Ser500 the composition is skewed to low complexity.

The protein belongs to the AB hydrolase superfamily. Lipase family. In terms of assembly, binds to both phosphatidylinositol (PI) and phosphatidylinositol 3,5-bisphosphate (PIP2).

It localises to the endosome. It is found in the multivesicular body membrane. The protein localises to the prevacuolar compartment membrane. The catalysed reaction is a triacylglycerol + H2O = a diacylglycerol + a fatty acid + H(+). In terms of biological role, lipase which is essential for lysis of subvacuolar cytoplasm to vacuole targeted bodies and intravacuolar autophagic bodies. Involved in the lysis of intravacuolar multivesicular body (MVB) vesicles. The intravacuolar membrane disintegration by ATG15 is critical to life span extension. Autophagy is required for proper vegetative growth, asexual/sexual reproduction, and full virulence. Autophagy is particularly involved in the biosynthesis of deoxynivalenol (DON), an important virulence determinant. The sequence is that of Putative lipase ATG15 from Gibberella zeae (strain ATCC MYA-4620 / CBS 123657 / FGSC 9075 / NRRL 31084 / PH-1) (Wheat head blight fungus).